A 247-amino-acid polypeptide reads, in one-letter code: Nodulation protein H (247 aa).

Positions 1-17 are hydrophobic; it reads MTHSTLPPQPFAILAMP.

Required for the formation of sulfated nod factor. Proposed to transfer activated sulfate (PAPS) to a N-acetylglucosamine of the nod factor. This is Nodulation protein H (nodH) from Rhizobium meliloti (strain 1021) (Ensifer meliloti).